Consider the following 824-residue polypeptide: Type IV secretion system protein PtlC (824 aa).

Gly456–Thr463 contacts ATP.

Belongs to the TrbE/VirB4 family.

It localises to the cell membrane. In terms of biological role, component of the type IV secretion system ptl essential for secretion of assembled pertussis toxin (PTX) through the outer membrane. This is Type IV secretion system protein PtlC (ptlC) from Bordetella pertussis (strain Tohama I / ATCC BAA-589 / NCTC 13251).